The chain runs to 45 residues: Large ribosomal subunit protein bL34 (45 aa).

Residues 1–27 (MTKRTLGGTSRKRKRVSGFRVRMRTHT) are disordered. Basic residues predominate over residues 10–27 (SRKRKRVSGFRVRMRTHT).

Belongs to the bacterial ribosomal protein bL34 family.

In Prochlorococcus marinus (strain MIT 9211), this protein is Large ribosomal subunit protein bL34.